The following is a 143-amino-acid chain: Cell division protein SepF (143 aa).

It belongs to the SepF family. Homodimer. Interacts with FtsZ.

It is found in the cytoplasm. In terms of biological role, cell division protein that is part of the divisome complex and is recruited early to the Z-ring. Probably stimulates Z-ring formation, perhaps through the cross-linking of FtsZ protofilaments. Its function overlaps with FtsA. The sequence is that of Cell division protein SepF from Geobacillus thermodenitrificans (strain NG80-2).